The chain runs to 576 residues: DM7 family protein GD16138 (576 aa).

Positions 454–481 are disordered; sequence FPELEPDSEPEPEPEPQTEDEGEDEGDK. The segment covering 457 to 478 has biased composition (acidic residues); the sequence is LEPDSEPEPEPEPQTEDEGEDE.

It belongs to the DM7 family.

This is DM7 family protein GD16138 from Drosophila simulans (Fruit fly).